A 309-amino-acid chain; its full sequence is Sulfate adenylyltransferase subunit 2 (309 aa).

This sequence belongs to the PAPS reductase family. CysD subfamily. As to quaternary structure, heterodimer composed of CysD, the smaller subunit, and CysN.

It carries out the reaction sulfate + ATP + H(+) = adenosine 5'-phosphosulfate + diphosphate. The protein operates within sulfur metabolism; hydrogen sulfide biosynthesis; sulfite from sulfate: step 1/3. Its function is as follows. With CysN forms the ATP sulfurylase (ATPS) that catalyzes the adenylation of sulfate producing adenosine 5'-phosphosulfate (APS) and diphosphate, the first enzymatic step in sulfur assimilation pathway. APS synthesis involves the formation of a high-energy phosphoric-sulfuric acid anhydride bond driven by GTP hydrolysis by CysN coupled to ATP hydrolysis by CysD. This is Sulfate adenylyltransferase subunit 2 from Mycolicibacterium gilvum (strain PYR-GCK) (Mycobacterium gilvum (strain PYR-GCK)).